The sequence spans 942 residues: Homeobox transcription factor phx1 (942 aa).

Composition is skewed to polar residues over residues 1-19 (MRSY…NINY), 61-73 (HLQG…TNPN), 99-116 (ADNN…TNPS), and 122-135 (IVKS…SKQN). Disordered regions lie at residues 1-54 (MRSY…MQLP), 61-80 (HLQG…PEFD), 87-172 (KQEK…KKQR), 604-651 (WANQ…STST), and 892-922 (SSSG…DVYS). Basic and acidic residues predominate over residues 142 to 151 (SVEKAKENVA). The segment covering 153 to 164 (ESGTPESGGSTS) has biased composition (low complexity). Residues 164 to 224 (SAPKSKKQRL…QNRRAKSKLI (61 aa)) constitute a DNA-binding region (homeobox). Polar residues-rich tracts occupy residues 604 to 614 (WANQLPRQPDS) and 630 to 641 (SHDTSSEYGNKS).

The protein localises to the nucleus. Functionally, trnascription factor that regulates the expression of the homocitrate synthase (HCS) lys4. The protein is Homeobox transcription factor phx1 (phx1) of Schizosaccharomyces pombe (strain 972 / ATCC 24843) (Fission yeast).